The sequence spans 88 residues: Small ribosomal subunit protein bS20 (88 aa).

Residues 1–27 (MANSKTAKKRAIQSEKRRQHNASRRSM) are disordered.

It belongs to the bacterial ribosomal protein bS20 family.

Functionally, binds directly to 16S ribosomal RNA. The chain is Small ribosomal subunit protein bS20 from Shewanella amazonensis (strain ATCC BAA-1098 / SB2B).